The following is a 173-amino-acid chain: Mesogenin-1 (173 aa).

Positions 39-68 (ESYSLSQTPSPQSVSPAASYESTYSSSPHT) are enriched in polar residues. 2 disordered regions span residues 39–69 (ESYS…PHTG) and 96–117 (TKKD…ASER). Positions 99 to 114 (DHGHKTSMTTHRRRKA) are enriched in basic residues. Positions 109-163 (HRRRKASEREKLRMRAIAEALHTLRNNLPPMYSQGRQPLTKIQTLKCTINYISEL) constitute a bHLH domain.

It localises to the nucleus. In terms of biological role, involved in specifying the paraxial, but not dorsal, mesoderm. May regulate the expression of T-box transcription factors required for mesoderm formation and differentiation, such as brachyury T, wnt8, vegt and eomes. This is Mesogenin-1 (msgn1) from Xenopus laevis (African clawed frog).